The sequence spans 336 residues: tRNA(Ile)-lysidine synthase (336 aa).

32–37 (SGGQDS) is an ATP binding site.

The protein belongs to the tRNA(Ile)-lysidine synthase family.

It is found in the cytoplasm. The catalysed reaction is cytidine(34) in tRNA(Ile2) + L-lysine + ATP = lysidine(34) in tRNA(Ile2) + AMP + diphosphate + H(+). Its function is as follows. Ligates lysine onto the cytidine present at position 34 of the AUA codon-specific tRNA(Ile) that contains the anticodon CAU, in an ATP-dependent manner. Cytidine is converted to lysidine, thus changing the amino acid specificity of the tRNA from methionine to isoleucine. In Synechococcus sp. (strain JA-3-3Ab) (Cyanobacteria bacterium Yellowstone A-Prime), this protein is tRNA(Ile)-lysidine synthase.